Here is a 257-residue protein sequence, read N- to C-terminus: UPF0246 protein Ping_3037 (257 aa).

Belongs to the UPF0246 family.

This Psychromonas ingrahamii (strain DSM 17664 / CCUG 51855 / 37) protein is UPF0246 protein Ping_3037.